Consider the following 572-residue polypeptide: Glypican-5 (572 aa).

A signal peptide spans 1-24; that stretch reads MDAQTWPVGFRCLLLLALVGSARS. 2 N-linked (GlcNAc...) asparagine glycosylation sites follow: asparagine 120 and asparagine 237. Positions 355–375 are disordered; the sequence is SPRCSFDQSKEKHGMKTTTRN. Serine 441, serine 486, serine 495, serine 507, and serine 509 each carry an O-linked (Xyl...) (glycosaminoglycan) serine glycan. An N-linked (GlcNAc...) asparagine glycan is attached at asparagine 527.

The protein belongs to the glypican family. In adult, primarily expressed in the brain. Also detected in fetal brain, lung and liver.

It is found in the cell membrane. The protein localises to the secreted. It localises to the extracellular space. Functionally, cell surface proteoglycan that bears heparan sulfate. This chain is Glypican-5 (GPC5), found in Homo sapiens (Human).